The primary structure comprises 238 residues: Purine nucleoside phosphorylase DeoD-type (238 aa).

His5 is an a purine D-ribonucleoside binding site. Residues Gly21, Arg25, Arg44, and Arg88–Ser91 each bind phosphate. A purine D-ribonucleoside contacts are provided by residues Glu180 to Glu182 and Ser204 to Asp205. Residue Asp205 is the Proton donor of the active site.

This sequence belongs to the PNP/UDP phosphorylase family. As to quaternary structure, homohexamer; trimer of homodimers.

It catalyses the reaction a purine D-ribonucleoside + phosphate = a purine nucleobase + alpha-D-ribose 1-phosphate. The catalysed reaction is a purine 2'-deoxy-D-ribonucleoside + phosphate = a purine nucleobase + 2-deoxy-alpha-D-ribose 1-phosphate. Its function is as follows. Catalyzes the reversible phosphorolytic breakdown of the N-glycosidic bond in the beta-(deoxy)ribonucleoside molecules, with the formation of the corresponding free purine bases and pentose-1-phosphate. In Photorhabdus laumondii subsp. laumondii (strain DSM 15139 / CIP 105565 / TT01) (Photorhabdus luminescens subsp. laumondii), this protein is Purine nucleoside phosphorylase DeoD-type.